The chain runs to 118 residues: Putative pterin-4-alpha-carbinolamine dehydratase (118 aa).

The protein belongs to the pterin-4-alpha-carbinolamine dehydratase family.

The enzyme catalyses (4aS,6R)-4a-hydroxy-L-erythro-5,6,7,8-tetrahydrobiopterin = (6R)-L-erythro-6,7-dihydrobiopterin + H2O. The sequence is that of Putative pterin-4-alpha-carbinolamine dehydratase from Stutzerimonas stutzeri (strain A1501) (Pseudomonas stutzeri).